A 125-amino-acid chain; its full sequence is Fluoride-specific ion channel FluC (125 aa).

The next 2 helical transmembrane spans lie at 4–24 (LWVA…GVWI) and 34–54 (YGTF…LTVL). Positions 74 and 77 each coordinate Na(+). Residues 99-119 (VLYFGSSLALGILAVWLGMVV) traverse the membrane as a helical segment.

This sequence belongs to the fluoride channel Fluc/FEX (TC 1.A.43) family.

It is found in the cell inner membrane. It carries out the reaction fluoride(in) = fluoride(out). Its activity is regulated as follows. Na(+) is not transported, but it plays an essential structural role and its presence is essential for fluoride channel function. Fluoride-specific ion channel. Important for reducing fluoride concentration in the cell, thus reducing its toxicity. The protein is Fluoride-specific ion channel FluC of Acidobacterium capsulatum (strain ATCC 51196 / DSM 11244 / BCRC 80197 / JCM 7670 / NBRC 15755 / NCIMB 13165 / 161).